Here is a 284-residue protein sequence, read N- to C-terminus: 4-diphosphocytidyl-2-C-methyl-D-erythritol kinase (284 aa).

Lysine 14 is an active-site residue. Residue 98–108 (PMGGGLGGGSS) coordinates ATP. Residue aspartate 140 is part of the active site.

Belongs to the GHMP kinase family. IspE subfamily.

It carries out the reaction 4-CDP-2-C-methyl-D-erythritol + ATP = 4-CDP-2-C-methyl-D-erythritol 2-phosphate + ADP + H(+). The protein operates within isoprenoid biosynthesis; isopentenyl diphosphate biosynthesis via DXP pathway; isopentenyl diphosphate from 1-deoxy-D-xylulose 5-phosphate: step 3/6. Its function is as follows. Catalyzes the phosphorylation of the position 2 hydroxy group of 4-diphosphocytidyl-2C-methyl-D-erythritol. This chain is 4-diphosphocytidyl-2-C-methyl-D-erythritol kinase, found in Shewanella baltica (strain OS155 / ATCC BAA-1091).